The following is a 330-amino-acid chain: Free fatty acid receptor 2 (330 aa).

Topologically, residues 1-12 (MLPDWKSSLILM) are extracellular. A helical transmembrane segment spans residues 13–33 (AYIIIFLTGLPANLLALRAFV). At 34–41 (GRIRQPQP) the chain is on the cytoplasmic side. Residues 42-62 (APVHILLLSLTLADLLLLLLL) traverse the membrane as a helical segment. Topologically, residues 63-84 (PFKIIEAASNFRWYLPKVVCAL) are extracellular. A helical transmembrane segment spans residues 85–105 (TSFGFYSSIYCSTWLLAGISI). Residues 106-126 (ERYLGVAFPVQYKLSRRPLYG) lie on the Cytoplasmic side of the membrane. The helical transmembrane segment at 127–147 (VIAALVAWVMSFGHCTIVIIV) threads the bilayer. Residues 148 to 173 (QYLNTTEQVRSGNEITCYENFTDNQL) lie on the Extracellular side of the membrane. N-linked (GlcNAc...) asparagine glycosylation is found at asparagine 151 and asparagine 167. A helical transmembrane segment spans residues 174–194 (DVVLPVRLELCLVLFFIPMAV). Over 195–219 (TIFCYWRFVWIMLSQPLVGAQRRRR) the chain is Cytoplasmic. The helical transmembrane segment at 220–240 (AVGLAVVTLLNFLVCFGPYNV) threads the bilayer. Over 241–255 (SHLVGYHQRKSPWWR) the chain is Extracellular. A helical transmembrane segment spans residues 256–276 (SIAVVFSSLNASLDPLLFYFS). Residues 277–330 (SSVVRRAFGRGLQVLRNQGSSLLGRRGKDTAEGTNEDRGVGQGEGMPSSDFTTE) lie on the Cytoplasmic side of the membrane. A disordered region spans residues 299–330 (LGRRGKDTAEGTNEDRGVGQGEGMPSSDFTTE). Positions 302-315 (RGKDTAEGTNEDRG) are enriched in basic and acidic residues.

The protein belongs to the G-protein coupled receptor 1 family. Interacts with FCN1 (via Fibrinogen C-terminal domain). Expressed at relatively high levels in peripheral blood leukocytes and, to lesser extent, in spleen.

Its subcellular location is the cell membrane. G protein-coupled receptor that is activated by a major product of dietary fiber digestion, the short chain fatty acids (SCFAs), and that plays a role in the regulation of whole-body energy homeostasis and in intestinal immunity. In omnivorous mammals, the short chain fatty acids acetate, propionate and butyrate are produced primarily by the gut microbiome that metabolizes dietary fibers. SCFAs serve as a source of energy but also act as signaling molecules. That G protein-coupled receptor is probably coupled to the pertussis toxin-sensitive, G(i/o)-alpha family of G proteins but also to the Gq family. Its activation results in the formation of inositol 1,4,5-trisphosphate, the mobilization of intracellular calcium, the phosphorylation of the MAPK3/ERK1 and MAPK1/ERK2 kinases and the inhibition of intracellular cAMP accumulation. May play a role in glucose homeostasis by regulating the secretion of GLP-1, in response to short-chain fatty acids accumulating in the intestine. May also regulate the production of LEP/Leptin, a hormone acting on the central nervous system to inhibit food intake. Finally, may also regulate whole-body energy homeostasis through adipogenesis regulating both differentiation and lipid storage of adipocytes. In parallel to its role in energy homeostasis, may also mediate the activation of the inflammatory and immune responses by SCFA in the intestine, regulating the rapid production of chemokines and cytokines. May also play a role in the resolution of the inflammatory response and control chemotaxis in neutrophils. In addition to SCFAs, may also be activated by the extracellular lectin FCN1 in a process leading to activation of monocytes and inducing the secretion of interleukin-8/IL-8 in response to the presence of microbes. Among SCFAs, the fatty acids containing less than 6 carbons, the most potent activators are probably acetate, propionate and butyrate. Exhibits a SCFA-independent constitutive G protein-coupled receptor activity. The chain is Free fatty acid receptor 2 (FFAR2) from Homo sapiens (Human).